The primary structure comprises 172 residues: Glutamyl-tRNA(Gln) amidotransferase subunit C-4, mitochondrial (172 aa).

The transit peptide at 1–23 (MIRIPFHLRQTPGRTLHSLVRSF) directs the protein to the mitochondrion. Residues 51 to 73 (PSKVPQRPHKSTIDGQSTPTRIP) form a disordered region.

This sequence belongs to the GatC family. In terms of assembly, subunit of the heterotrimeric GatCAB amidotransferase (AdT) complex, composed of A, B and C subunits.

It localises to the mitochondrion. It carries out the reaction L-glutamyl-tRNA(Gln) + L-glutamine + ATP + H2O = L-glutaminyl-tRNA(Gln) + L-glutamate + ADP + phosphate + H(+). Allows the formation of correctly charged Gln-tRNA(Gln) through the transamidation of misacylated Glu-tRNA(Gln) in the mitochondria. The reaction takes place in the presence of glutamine and ATP through an activated gamma-phospho-Glu-tRNA(Gln). This Culex quinquefasciatus (Southern house mosquito) protein is Glutamyl-tRNA(Gln) amidotransferase subunit C-4, mitochondrial.